Here is a 151-residue protein sequence, read N- to C-terminus: MTLERTFVAIKPDGVQRGLIAEILGRFETKGFKLVGLKQLTPSKELAEKHYGVHKDRPFFSGLVDFITSGPVVAMVWEGEGVIASARKLIGATKPLEAEPGTIRGDLAVNIGRNVIHGSDGSDTAVFEINLWFQENELVDWNPSDQAWRVE.

6 residues coordinate ATP: Lys11, Phe59, Arg87, Thr93, Arg104, and Asn114. His117 functions as the Pros-phosphohistidine intermediate in the catalytic mechanism.

It belongs to the NDK family. As to quaternary structure, homotetramer. Requires Mg(2+) as cofactor.

It localises to the cytoplasm. The enzyme catalyses a 2'-deoxyribonucleoside 5'-diphosphate + ATP = a 2'-deoxyribonucleoside 5'-triphosphate + ADP. The catalysed reaction is a ribonucleoside 5'-diphosphate + ATP = a ribonucleoside 5'-triphosphate + ADP. Functionally, major role in the synthesis of nucleoside triphosphates other than ATP. The ATP gamma phosphate is transferred to the NDP beta phosphate via a ping-pong mechanism, using a phosphorylated active-site intermediate. The protein is Nucleoside diphosphate kinase of Prochlorococcus marinus (strain NATL1A).